The following is a 404-amino-acid chain: S-adenosylmethionine synthase (404 aa).

A compositionally biased stretch (polar residues) spans 1 to 13 (MSQSRYFFTSESV). The interval 1 to 20 (MSQSRYFFTSESVSEGHPDK) is disordered. His-17 provides a ligand contact to ATP. Asp-19 serves as a coordination point for Mg(2+). Glu-45 lines the K(+) pocket. Residues Glu-58 and Gln-101 each contribute to the L-methionine site. The segment at 101–111 (QSPDINRGVDR) is flexible loop. ATP-binding positions include 172–174 (DAK), 245–246 (RF), Asp-254, 260–261 (RK), Ala-277, and Lys-281. Asp-254 is an L-methionine binding site. Lys-285 serves as a coordination point for L-methionine.

Belongs to the AdoMet synthase family. As to quaternary structure, homotetramer; dimer of dimers. It depends on Mg(2+) as a cofactor. The cofactor is K(+).

The protein localises to the cytoplasm. It carries out the reaction L-methionine + ATP + H2O = S-adenosyl-L-methionine + phosphate + diphosphate. The protein operates within amino-acid biosynthesis; S-adenosyl-L-methionine biosynthesis; S-adenosyl-L-methionine from L-methionine: step 1/1. Functionally, catalyzes the formation of S-adenosylmethionine (AdoMet) from methionine and ATP. The overall synthetic reaction is composed of two sequential steps, AdoMet formation and the subsequent tripolyphosphate hydrolysis which occurs prior to release of AdoMet from the enzyme. The protein is S-adenosylmethionine synthase of Chlorobium limicola (strain DSM 245 / NBRC 103803 / 6330).